Here is a 282-residue protein sequence, read N- to C-terminus: Pantothenate synthetase (282 aa).

ATP is bound at residue 30 to 37 (MGYLHEGH). Histidine 37 functions as the Proton donor in the catalytic mechanism. Glutamine 61 serves as a coordination point for (R)-pantoate. Glutamine 61 is a binding site for beta-alanine. Residue 147-150 (GMKD) coordinates ATP. A (R)-pantoate-binding site is contributed by glutamine 153. ATP contacts are provided by residues valine 176 and 184–187 (KSSR).

This sequence belongs to the pantothenate synthetase family. Homodimer.

The protein localises to the cytoplasm. The catalysed reaction is (R)-pantoate + beta-alanine + ATP = (R)-pantothenate + AMP + diphosphate + H(+). It participates in cofactor biosynthesis; (R)-pantothenate biosynthesis; (R)-pantothenate from (R)-pantoate and beta-alanine: step 1/1. Functionally, catalyzes the condensation of pantoate with beta-alanine in an ATP-dependent reaction via a pantoyl-adenylate intermediate. In Bacillus thuringiensis subsp. konkukian (strain 97-27), this protein is Pantothenate synthetase.